Here is a 185-residue protein sequence, read N- to C-terminus: Meiotic expression up-regulated protein 31 (185 aa).

This Schizosaccharomyces pombe (strain 972 / ATCC 24843) (Fission yeast) protein is Meiotic expression up-regulated protein 31 (meu31).